The sequence spans 102 residues: Large ribosomal subunit protein bL21 (102 aa).

Belongs to the bacterial ribosomal protein bL21 family. Part of the 50S ribosomal subunit. Contacts protein L20.

Functionally, this protein binds to 23S rRNA in the presence of protein L20. The sequence is that of Large ribosomal subunit protein bL21 from Cytophaga hutchinsonii (strain ATCC 33406 / DSM 1761 / CIP 103989 / NBRC 15051 / NCIMB 9469 / D465).